Reading from the N-terminus, the 110-residue chain is uncharacterized protein (110 aa).

Its subcellular location is the plastid. It is found in the chloroplast. This is an uncharacterized protein from Auxenochlorella pyrenoidosa (Freshwater green alga).